The following is a 172-amino-acid chain: MFFHLTLEKDLHMHPKHCGPNLFTIATQQLYSEVEGTCTGRYGFIITITSVDFLSKGKVLESSGYVVFNVKYKAIIFKPFKGEVLDAIVTKVTNLGFFAEAGPLSIFVSTQLIPSDMIFDAQSAVPCFVSEDGSSKISKDDEVRLQIKGTRVDATEIFAIGSIREDYLGVIG.

The protein belongs to the eukaryotic RPB7/RPC8 RNA polymerase subunit family. Component of the RNA polymerase II (Pol II) complex consisting of 12 subunits. RPB4 and RPB7 form a subcomplex that protrudes from the 10-subunit Pol II core complex.

Its subcellular location is the nucleus. DNA-dependent RNA polymerase catalyzes the transcription of DNA into RNA using the four ribonucleoside triphosphates as substrates. Component of RNA polymerase II which synthesizes mRNA precursors and many functional non-coding RNAs. Pol II is the central component of the basal RNA polymerase II transcription machinery. It is composed of mobile elements that move relative to each other. RPB7 is part of a subcomplex with RPB4 that binds to a pocket formed by RPB1, RPB2 and RPB6 at the base of the clamp element. The RPB4-RPB7 subcomplex seems to lock the clamp via RPB7 in the closed conformation thus preventing double-stranded DNA to enter the active site cleft. The RPB4-RPB7 subcomplex binds single-stranded DNA and RNA. This is DNA-directed RNA polymerase II subunit rpb7 (polr2g) from Dictyostelium discoideum (Social amoeba).